The primary structure comprises 342 residues: GTPase Obg (342 aa).

An Obg domain is found at 1–159 (MQFIDQAQIE…KLLRLELKLL (159 aa)). The OBG-type G domain occupies 160–330 (AEVGIIGLPN…MLQEVWGILD (171 aa)). GTP is bound by residues 166–173 (GLPNAGKS), 191–195 (FTTLI), 213–216 (DIPG), 280–283 (NKID), and 311–313 (SAV). Positions 173 and 193 each coordinate Mg(2+).

Belongs to the TRAFAC class OBG-HflX-like GTPase superfamily. OBG GTPase family. As to quaternary structure, monomer. The cofactor is Mg(2+).

It is found in the cytoplasm. In terms of biological role, an essential GTPase which binds GTP, GDP and possibly (p)ppGpp with moderate affinity, with high nucleotide exchange rates and a fairly low GTP hydrolysis rate. Plays a role in control of the cell cycle, stress response, ribosome biogenesis and in those bacteria that undergo differentiation, in morphogenesis control. The sequence is that of GTPase Obg from Nostoc sp. (strain PCC 7120 / SAG 25.82 / UTEX 2576).